Here is a 217-residue protein sequence, read N- to C-terminus: Homologous-pairing protein 2 homolog (217 aa).

Positions 93–153 form a coiled coil; sequence IVALTAKVQS…LKNIKAATNH (61 aa). Residues 118 to 182 are DNA-binding; the sequence is SSALTTPEMQ…WRKRKRMATE (65 aa).

Belongs to the HOP2 family. In terms of assembly, interacts with the DNA-binding domain of the nuclear receptors NR3C1/GR, ESR2/ER-beta, THRB and RXRA. Forms a stable heterodimer with MND1. Interacts with PSMC3/TBP1. PTM: Phosphorylated by PKA, PKC and MAPK. As to expression, highly expressed in testis and colon.

It is found in the nucleus. Plays an important role in meiotic recombination. Stimulates DMC1-mediated strand exchange required for pairing homologous chromosomes during meiosis. The complex PSMC3IP/MND1 binds DNA, stimulates the recombinase activity of DMC1 as well as DMC1 D-loop formation from double-strand DNA. This complex stabilizes presynaptic RAD51 and DMC1 filaments formed on single strand DNA to capture double-strand DNA. This complex stimulates both synaptic and presynaptic critical steps in RAD51 and DMC1-promoted homologous pairing. May inhibit HIV-1 viral protein TAT activity and modulate the activity of proteasomes through association with PSMC3. Acts as a tissue specific coactivator of hormone-dependent transcription mediated by nuclear receptors. The chain is Homologous-pairing protein 2 homolog (PSMC3IP) from Homo sapiens (Human).